Consider the following 87-residue polypeptide: MANTRSAKKMVRKIAARTDVNKARRSRVRTYVRKVEEAIASGDKPAAQEALKAAQPEIMRSVTKGVTHKNTASRKVSRLSARVKAMA.

Basic residues predominate over residues 1–15; it reads MANTRSAKKMVRKIA. Disordered regions lie at residues 1–22 and 64–87; these read MANTRSAKKMVRKIAARTDVNK and KGVTHKNTASRKVSRLSARVKAMA.

The protein belongs to the bacterial ribosomal protein bS20 family.

Its function is as follows. Binds directly to 16S ribosomal RNA. In Hyphomonas neptunium (strain ATCC 15444), this protein is Small ribosomal subunit protein bS20.